The following is a 177-amino-acid chain: Meiotic chromosome segregation protein C17A2.07c (177 aa).

The disordered stretch occupies residues 71 to 90 (EDDSINKPTEEADEAPRTQL). Over residues 74–86 (SINKPTEEADEAP) the composition is skewed to basic and acidic residues.

The protein localises to the nucleus. Its function is as follows. Involved in meiotic chromosome segregation. The protein is Meiotic chromosome segregation protein C17A2.07c of Schizosaccharomyces pombe (strain 972 / ATCC 24843) (Fission yeast).